Here is a 188-residue protein sequence, read N- to C-terminus: Phosphoribosylglycinamide formyltransferase (188 aa).

Residue 12–14 coordinates N(1)-(5-phospho-beta-D-ribosyl)glycinamide; the sequence is GSN. (6R)-10-formyltetrahydrofolate-binding positions include lysine 66, 91 to 94, and asparagine 108; that span reads MRLI. Histidine 110 acts as the Proton donor in catalysis.

The protein belongs to the GART family.

It carries out the reaction N(1)-(5-phospho-beta-D-ribosyl)glycinamide + (6R)-10-formyltetrahydrofolate = N(2)-formyl-N(1)-(5-phospho-beta-D-ribosyl)glycinamide + (6S)-5,6,7,8-tetrahydrofolate + H(+). Its pathway is purine metabolism; IMP biosynthesis via de novo pathway; N(2)-formyl-N(1)-(5-phospho-D-ribosyl)glycinamide from N(1)-(5-phospho-D-ribosyl)glycinamide (10-formyl THF route): step 1/1. Catalyzes the transfer of a formyl group from 10-formyltetrahydrofolate to 5-phospho-ribosyl-glycinamide (GAR), producing 5-phospho-ribosyl-N-formylglycinamide (FGAR) and tetrahydrofolate. The sequence is that of Phosphoribosylglycinamide formyltransferase from Staphylococcus aureus (strain MRSA252).